A 155-amino-acid polypeptide reads, in one-letter code: MSGVILDLQLACENEQGLPAETDFQRWLEAVLPQFQPESEVTIRLVDEAESRELNHTYRSKDKPTNVLSFPFEAPPGIELPLLGDLIICRQVVEQEAVEQGKTREAHWAHMVIHGSLHLLGYDHIEDDEAEEMESLETEIMLALGYPDPYISEKE.

Residues histidine 114, histidine 118, and histidine 124 each coordinate Zn(2+).

Belongs to the endoribonuclease YbeY family. Zn(2+) is required as a cofactor.

The protein resides in the cytoplasm. Single strand-specific metallo-endoribonuclease involved in late-stage 70S ribosome quality control and in maturation of the 3' terminus of the 16S rRNA. The polypeptide is Endoribonuclease YbeY (Erwinia tasmaniensis (strain DSM 17950 / CFBP 7177 / CIP 109463 / NCPPB 4357 / Et1/99)).